The sequence spans 155 residues: Small ribosomal subunit protein uS7c (155 aa).

This sequence belongs to the universal ribosomal protein uS7 family. In terms of assembly, part of the 30S ribosomal subunit.

The protein resides in the plastid. Its subcellular location is the chloroplast. Functionally, one of the primary rRNA binding proteins, it binds directly to 16S rRNA where it nucleates assembly of the head domain of the 30S subunit. The chain is Small ribosomal subunit protein uS7c (rps7) from Chaetosphaeridium globosum (Charophycean green alga).